We begin with the raw amino-acid sequence, 141 residues long: Hemoglobin subunit alpha-1/2 (141 aa).

The Globin domain maps to 1-141 (VLSPADKTNV…VSTVLTSKYR (141 aa)). Phosphoserine is present on serine 3. The residue at position 7 (lysine 7) is an N6-succinyllysine. Phosphothreonine is present on threonine 8. Lysine 11 is modified (N6-succinyllysine). Lysine 16 bears the N6-acetyllysine; alternate mark. The residue at position 16 (lysine 16) is an N6-succinyllysine; alternate. Tyrosine 24 is subject to Phosphotyrosine. At serine 35 the chain carries Phosphoserine. Lysine 40 carries the N6-succinyllysine modification. Serine 49 carries the phosphoserine modification. Histidine 58 serves as a coordination point for O2. Histidine 87 contributes to the heme b binding site. A Phosphoserine modification is found at serine 102. Threonine 108 carries the post-translational modification Phosphothreonine. 2 positions are modified to phosphoserine: serine 124 and serine 131. A phosphothreonine mark is found at threonine 134 and threonine 137. Position 138 is a phosphoserine (serine 138).

Belongs to the globin family. As to quaternary structure, heterotetramer of two alpha chains and two beta chains. Red blood cells.

In terms of biological role, involved in oxygen transport from the lung to the various peripheral tissues. The chain is Hemoglobin subunit alpha-1/2 from Macaca sinica (Toque macaque).